A 32-amino-acid chain; its full sequence is CGGAGAKCSTKSDCCSGLWCSGSGHCYHRRYT.

3 cysteine pairs are disulfide-bonded: Cys-1-Cys-15, Cys-8-Cys-20, and Cys-14-Cys-26.

It is found in the secreted. The protein resides in the nematocyst. In terms of biological role, reversibly inhibits acid-sensing ion channels (ASIC) in rat dorsal root ganglia neurons. Reversibly inhibits voltage-gated potassium channels (Kv) in rat DRG neurons. The sequence is that of Acatoxin 1 from Anthopleura cascaia (Sea anemone).